A 482-amino-acid chain; its full sequence is MAHRLLRDAQADGWERSDFPIICESCLGDNPYVRMLRAEYDKECKICARPFTVFRWRPGRDARYKKTEICQTCCKLKNVCQVCLLDLEYGLPVQVRDTALAINSNDAIPRSDVNREYFAEEHDRKARAGIDYDSSHGKARPNDTILKLQRTAPYYKRNRAHVCSFYVRGECTRGAECPYRHEMPETGELSQQNIKDRYYGVNDPVALKLLGKAGEMPSLTPPDDESIRTLYIGGLNNRITEQDLRDQFYAHGEIESIRMVLQRACAFVTYTTREGAEKAAEELANKLVIKGIRLKLMWGKPQAPKPEDDEAGRQGHVAHGGMLPRAVISQQQSGDQPQPPGMEGQQQAPSGSYYFNIPAPPGAERTLYPSMDPQRMGALVKSQEGDGKPGPQQAAQAQASSSSGQSYPMPPQYYHGQYPPYYPPYGGYMPPPRMPYPPPPQYPPYQPMLATPAQSQASSSQQPAPATLHQAQVPPPQQTTQN.

The C3H1-type zinc finger occupies 157 to 184 (RNRAHVCSFYVRGECTRGAECPYRHEMP). Positions 228–301 (RTLYIGGLNN…IRLKLMWGKP (74 aa)) constitute an RRM domain. 2 stretches are compositionally biased toward low complexity: residues 329 to 347 (SQQQ…GQQQ) and 389 to 428 (PGPQ…YGGY). Positions 329-482 (SQQQSGDQPQ…VPPPQQTTQN (154 aa)) are disordered. Pro residues predominate over residues 429-446 (MPPPRMPYPPPPQYPPYQ). Over residues 452–466 (PAQSQASSSQQPAPA) the composition is skewed to low complexity. Pro residues predominate over residues 473–482 (VPPPQQTTQN).

The polypeptide is Zinc finger CCCH domain-containing protein 40 (Oryza sativa subsp. japonica (Rice)).